The following is a 249-amino-acid chain: MADS-box transcription factor 7 (249 aa).

The MADS-box domain occupies 1 to 61; it reads MGRGRVELKR…GKLYEFCSTQ (61 aa). One can recognise a K-box domain in the interval 90–180; the sequence is LKASRNEYLK…RRKLEESNHV (91 aa).

May interact with the K-box of MADS6. May interact with MADS13 and MADS18. Expressed in lodicules, stamens and carpels.

The protein localises to the nucleus. In terms of biological role, probable transcription factor. May be involved in the control of flowering time. In Oryza sativa subsp. japonica (Rice), this protein is MADS-box transcription factor 7 (MADS7).